A 453-amino-acid polypeptide reads, in one-letter code: O-glucose prenyltransferase PaPT (453 aa).

95–96 (AP) lines the L-tryptophan pocket. The substrate site is built by K210, Y212, R279, K281, Y283, Y368, and Y435.

The protein belongs to the tryptophan dimethylallyltransferase family.

The protein operates within mycotoxin biosynthesis. Functionally, O-glucose prenyltransferase; part of the 2 gene clusters that mediate the biosynthesis of fusicoccins, diterpene glucosides that display phytohormone-like activity and function as potent activators of plasma membrane H(+)-ATPases in plants by modifying 14-3-3 proteins and cause the plant disease constriction canker. The first step in the pathway is performed by the fusicoccadiene synthase PaFS that possesses both prenyl transferase and terpene cyclase activity, converting isopentenyl diphosphate and dimethylallyl diphosphate into geranylgeranyl diphosphate (GGDP) and successively converting GGDP into fusicocca-2,10(14)-diene, a precursor for fusicoccin H. The second step is the oxidation at the C-8 position by the cytochrome P450 monooxygenase PaP450-2 to yield fusicocca-2,10(14)-diene-8-beta-ol. The cytochrome P450 monooxygenase PaP450-1 then catalyzes the hydroxylation at the C-16 position to produce fusicocca-2,10(14)-diene-8-beta,16-diol. The dioxygenase fc-dox then catalyzes the 16-oxydation of fusicocca-2,10(14)-diene-8-beta,16-diol to yield an aldehyde (8-beta-hydroxyfusicocca-1,10(14)-dien-16-al). The short-chain dehydrogenase/reductase fc-sdr catalyzes the reduction of the aldehyde to yield fusicocca-1,10(14)-diene-8-beta,16-diol. The next step is the hydroxylation at C-9 performed by the cytochrome P450 monooxygenase PaP450-3 that leads to fusicoccin H aglycon which is glycosylated to fusicoccin H by the O-glycosyltransferase PaGT. Hydroxylation at C-12 by the cytochrome P450 monooxygenase PaP450-4 leads then to the production of fusicoccin Q and is followed by methylation by the O-methyltransferase PaMT to yield fusicoccin P. Fusicoccin P is further converted to fusicoccin J via prenylation by the O-glucose prenyltransferase PaPT. Cytochrome P450 monooxygenase PaP450-5 then performs hydroxylation at C-19 to yield dideacetyl-fusicoccin A which is acetylated to 3'-O-deacetyl-fusicoccin A by the O-acetyltransferase PaAT-2. Finally, a another acetylation by the O-acetyltransferase PaAT-1 yields fusicoccin A. This chain is O-glucose prenyltransferase PaPT, found in Phomopsis amygdali (Fusicoccum amygdali).